The chain runs to 664 residues: Chaperone protein DnaK (664 aa).

At threonine 201 the chain carries Phosphothreonine; by autocatalysis. A compositionally biased stretch (basic and acidic residues) spans leucine 574–arginine 592. The tract at residues leucine 574 to aspartate 664 is disordered. The segment covering alanine 600–glutamine 617 has biased composition (low complexity). A compositionally biased stretch (polar residues) spans glycine 639–glutamate 649.

The protein belongs to the heat shock protein 70 family.

Its function is as follows. Acts as a chaperone. This Chlamydia felis (strain Fe/C-56) (Chlamydophila felis) protein is Chaperone protein DnaK.